We begin with the raw amino-acid sequence, 148 residues long: 3-dehydroquinate dehydratase (148 aa).

Tyr26 (proton acceptor) is an active-site residue. The substrate site is built by Asn77, His83, and Asp90. His103 acts as the Proton donor in catalysis. Substrate-binding positions include 104–105 (LS) and Arg114.

Belongs to the type-II 3-dehydroquinase family. Homododecamer.

The catalysed reaction is 3-dehydroquinate = 3-dehydroshikimate + H2O. Its pathway is metabolic intermediate biosynthesis; chorismate biosynthesis; chorismate from D-erythrose 4-phosphate and phosphoenolpyruvate: step 3/7. Catalyzes a trans-dehydration via an enolate intermediate. The chain is 3-dehydroquinate dehydratase (aroQ) from Pasteurella multocida (strain Pm70).